The sequence spans 487 residues: Betaine aldehyde dehydrogenase 1 (487 aa).

K(+) contacts are provided by S26, I27, and D93. 150–152 (GAW) serves as a coordination point for NAD(+). The Charge relay system role is filled by K162. Residues 176-179 (KPSE) and 229-232 (SVPT) each bind NAD(+). L244 contacts K(+). The Proton acceptor role is filled by E250. G252, C284, and E384 together coordinate NAD(+). C284 acts as the Nucleophile in catalysis. C284 carries the cysteine sulfenic acid (-SOH) modification. Residues K454 and G457 each coordinate K(+). The Charge relay system role is filled by E461.

It belongs to the aldehyde dehydrogenase family. As to quaternary structure, dimer of dimers. K(+) is required as a cofactor.

It carries out the reaction betaine aldehyde + NAD(+) + H2O = glycine betaine + NADH + 2 H(+). It participates in amine and polyamine biosynthesis; betaine biosynthesis via choline pathway; betaine from betaine aldehyde: step 1/1. Functionally, involved in the biosynthesis of the osmoprotectant glycine betaine. Catalyzes the irreversible oxidation of betaine aldehyde to the corresponding acid. This Rhizobium meliloti (strain 1021) (Ensifer meliloti) protein is Betaine aldehyde dehydrogenase 1.